The primary structure comprises 139 residues: Phosphoribosyl-AMP cyclohydrolase (139 aa).

D95 contacts Mg(2+). C96 is a Zn(2+) binding site. Positions 97 and 99 each coordinate Mg(2+). Zn(2+) is bound by residues C114 and C121.

Belongs to the PRA-CH family. Homodimer. It depends on Mg(2+) as a cofactor. Requires Zn(2+) as cofactor.

It localises to the cytoplasm. It catalyses the reaction 1-(5-phospho-beta-D-ribosyl)-5'-AMP + H2O = 1-(5-phospho-beta-D-ribosyl)-5-[(5-phospho-beta-D-ribosylamino)methylideneamino]imidazole-4-carboxamide. The protein operates within amino-acid biosynthesis; L-histidine biosynthesis; L-histidine from 5-phospho-alpha-D-ribose 1-diphosphate: step 3/9. In terms of biological role, catalyzes the hydrolysis of the adenine ring of phosphoribosyl-AMP. The chain is Phosphoribosyl-AMP cyclohydrolase from Chelativorans sp. (strain BNC1).